Consider the following 404-residue polypeptide: Cysteine desulfurase IscS (404 aa).

Pyridoxal 5'-phosphate-binding positions include alanine 75–threonine 76, asparagine 155, glutamine 183, and serine 203–histidine 205. Position 206 is an N6-(pyridoxal phosphate)lysine (lysine 206). Threonine 243 contributes to the pyridoxal 5'-phosphate binding site. The Cysteine persulfide intermediate role is filled by cysteine 328. Cysteine 328 serves as a coordination point for [2Fe-2S] cluster.

This sequence belongs to the class-V pyridoxal-phosphate-dependent aminotransferase family. NifS/IscS subfamily. In terms of assembly, homodimer. Forms a heterotetramer with IscU, interacts with other sulfur acceptors. Requires pyridoxal 5'-phosphate as cofactor.

The protein localises to the cytoplasm. It catalyses the reaction (sulfur carrier)-H + L-cysteine = (sulfur carrier)-SH + L-alanine. The protein operates within cofactor biosynthesis; iron-sulfur cluster biosynthesis. Master enzyme that delivers sulfur to a number of partners involved in Fe-S cluster assembly, tRNA modification or cofactor biosynthesis. Catalyzes the removal of elemental sulfur atoms from cysteine to produce alanine. Functions as a sulfur delivery protein for Fe-S cluster synthesis onto IscU, an Fe-S scaffold assembly protein, as well as other S acceptor proteins. The protein is Cysteine desulfurase IscS of Azotobacter vinelandii (strain DJ / ATCC BAA-1303).